Reading from the N-terminus, the 228-residue chain is Thermonuclease (228 aa).

The signal sequence occupies residues 1 to 23 (MTEYLLSAGICMAIVSILLIGMA). Positions 24–60 (ISNVSKGQYAKRFFFFATSCLVLTLVVVSSLSSSANA) are excised as a propeptide. Asp-100 contributes to the Ca(2+) binding site. The active site involves Arg-114. Residues Asp-119 and Thr-120 each contribute to the Ca(2+) site. Residues Glu-122 and Arg-166 contribute to the active site.

It belongs to the thermonuclease family. Ca(2+) serves as cofactor.

It localises to the secreted. The catalysed reaction is Endonucleolytic cleavage to nucleoside 3'-phosphates and 3'-phosphooligonucleotide end-products.. Enzyme that catalyzes the hydrolysis of both DNA and RNA at the 5' position of the phosphodiester bond. This is Thermonuclease (nuc) from Staphylococcus aureus (strain MSSA476).